The chain runs to 246 residues: Small ribosomal subunit protein uS2c (246 aa).

Belongs to the universal ribosomal protein uS2 family.

The protein localises to the plastid. The protein resides in the chloroplast. The protein is Small ribosomal subunit protein uS2c (rps2) of Pelargonium hortorum (Common geranium).